The primary structure comprises 184 residues: Transposon Tn917 resolvase (184 aa).

The region spanning 1 to 134 (MIFGYARVST…SGLKAARVRG (134 aa)) is the Resolvase/invertase-type recombinase catalytic domain. The active-site O-(5'-phospho-DNA)-serine intermediate is the Ser-9. The H-T-H motif DNA-binding region spans 161 to 180 (IRQILDASKLSKTTFYRYLN).

It belongs to the site-specific recombinase resolvase family.

In terms of biological role, resolvase catalyzes the resolution (a site-specific recombination) of the cointegrated replicon to yield the final transposition products. The chain is Transposon Tn917 resolvase (tnpR) from Enterococcus faecalis (Streptococcus faecalis).